We begin with the raw amino-acid sequence, 303 residues long: MEILPVGEESLGVRSMCLYVETRDVRILFDAGVSLAPRRFGLPPHPRELERARAVRSEILRLAAAADVITVSHYHRDHFTPWYPSVYMATDGETYRQIYGGKRVLLKSPDDLNWSQRRRHYGLSKALGDAGAELIYADGGEWRVGGTVIKASQSLWHGPAGSKTGRVVAFAVLDGEERLAFVPDVEGPVEPEPVAFLKEVRPTIAVVGGPPTYLPWDIEAAIRHLREVVDLAPRVLVVAHHALRSGDWREKLAPLFEYAEKRGVEIATYASLRGVGEELLEASRKELYKREPAEALVFEEEEE.

The protein belongs to the UPF0282 family.

The sequence is that of UPF0282 protein PAE3680 from Pyrobaculum aerophilum (strain ATCC 51768 / DSM 7523 / JCM 9630 / CIP 104966 / NBRC 100827 / IM2).